The following is a 434-amino-acid chain: V-type ATP synthase beta chain (434 aa).

Belongs to the ATPase alpha/beta chains family.

In terms of biological role, produces ATP from ADP in the presence of a proton gradient across the membrane. The V-type beta chain is a regulatory subunit. The protein is V-type ATP synthase beta chain of Borrelia garinii subsp. bavariensis (strain ATCC BAA-2496 / DSM 23469 / PBi) (Borreliella bavariensis).